Consider the following 270-residue polypeptide: MTSDRPLKLLISNDDGISALGVRTLANTLATAGHQVTVVCPDGERSATGHGLTLHHPIRAEQVEGIFHPDVIAWSCSGTPADSVKFALSAVLKERPDLVLAGINHGSNLGTDILYSGTVSAALEGLIEGIPSIAFSLASFKACDFQPAADFALTLVRKVALNPFPLPTLLNVNVPPVSSGEIKGVKITRQGLRHYEETFEKRLDPRGKSYYWLIGEVVEDIEQPDYTHLPPEVPTDVRAIGENFITITPLQYNLTDVQGFQHLHRNSWFD.

Positions 14, 15, 46, and 104 each coordinate a divalent metal cation.

It belongs to the SurE nucleotidase family. A divalent metal cation is required as a cofactor.

It is found in the cytoplasm. It carries out the reaction a ribonucleoside 5'-phosphate + H2O = a ribonucleoside + phosphate. Nucleotidase that shows phosphatase activity on nucleoside 5'-monophosphates. The protein is 5'-nucleotidase SurE of Microcystis aeruginosa (strain NIES-843 / IAM M-2473).